Consider the following 299-residue polypeptide: Bifunctional protein FolD (299 aa).

NADP(+) is bound by residues 168 to 170 (GRS), S193, and I234.

Belongs to the tetrahydrofolate dehydrogenase/cyclohydrolase family. Homodimer.

The enzyme catalyses (6R)-5,10-methylene-5,6,7,8-tetrahydrofolate + NADP(+) = (6R)-5,10-methenyltetrahydrofolate + NADPH. The catalysed reaction is (6R)-5,10-methenyltetrahydrofolate + H2O = (6R)-10-formyltetrahydrofolate + H(+). It functions in the pathway one-carbon metabolism; tetrahydrofolate interconversion. Catalyzes the oxidation of 5,10-methylenetetrahydrofolate to 5,10-methenyltetrahydrofolate and then the hydrolysis of 5,10-methenyltetrahydrofolate to 10-formyltetrahydrofolate. In Bartonella bacilliformis (strain ATCC 35685 / KC583 / Herrer 020/F12,63), this protein is Bifunctional protein FolD.